The sequence spans 322 residues: Malate dehydrogenase (322 aa).

Residues Gly10–Gly15 and Asp34 contribute to the NAD(+) site. 2 residues coordinate substrate: Arg83 and Arg89. NAD(+) is bound by residues Asn96 and Ile119–Asn121. Substrate is bound by residues Asn121 and Arg152. His176 functions as the Proton acceptor in the catalytic mechanism.

This sequence belongs to the LDH/MDH superfamily. MDH type 3 family.

It carries out the reaction (S)-malate + NAD(+) = oxaloacetate + NADH + H(+). Its function is as follows. Catalyzes the reversible oxidation of malate to oxaloacetate. The chain is Malate dehydrogenase from Mesorhizobium japonicum (strain LMG 29417 / CECT 9101 / MAFF 303099) (Mesorhizobium loti (strain MAFF 303099)).